Here is a 348-residue protein sequence, read N- to C-terminus: Selenide, water dikinase (348 aa).

Residue Cys17 is part of the active site. Residues Lys20 and Thr47–Asp49 each bind ATP. Asp50 serves as a coordination point for Mg(2+). Residues Asp67, Asp90, and Gly138 to Thr140 each bind ATP. Position 90 (Asp90) interacts with Mg(2+). Asp226 contacts Mg(2+).

This sequence belongs to the selenophosphate synthase 1 family. Class I subfamily. As to quaternary structure, homodimer. Requires Mg(2+) as cofactor.

The enzyme catalyses hydrogenselenide + ATP + H2O = selenophosphate + AMP + phosphate + 2 H(+). In terms of biological role, synthesizes selenophosphate from selenide and ATP. This is Selenide, water dikinase from Porphyromonas gingivalis (strain ATCC 33277 / DSM 20709 / CIP 103683 / JCM 12257 / NCTC 11834 / 2561).